A 417-amino-acid chain; its full sequence is Phosphoglycerate kinase 1 (417 aa).

Residue Ser-2 is modified to N-acetylserine. Phosphoserine is present on residues Ser-2 and Ser-4. N6-succinyllysine is present on Lys-6. At Lys-11 the chain carries N6-acetyllysine. Val-23, Asp-24, Phe-25, Asn-26, Gln-38, and Arg-39 together coordinate (2R)-3-phosphoglycerate. Positions 38 to 43 are mitochondrial targeting region exposed following cis-trans isomerization by PIN1 and recognized by the TOM complex for mitochondrial translocation of the protein; it reads QRIKAA. Lys-48 is subject to N6-acetyllysine; alternate. Lys-48 is modified (N6-succinyllysine; alternate). Positions 62, 63, 65, and 66 each coordinate (2R)-3-phosphoglycerate. Lys-75 carries the N6-acetyllysine modification. The residue at position 76 (Tyr-76) is a Phosphotyrosine. An N6-acetyllysine mark is found at Lys-86 and Lys-91. Lys-97 is subject to N6-acetyllysine; alternate. N6-(2-hydroxyisobutyryl)lysine; alternate is present on Lys-97. Leu-122 and Arg-123 together coordinate (2R)-3-phosphoglycerate. Position 131 is an N6-acetyllysine; alternate (Lys-131). At Lys-131 the chain carries N6-malonyllysine; alternate. N6-acetyllysine is present on Lys-146. Positions 170 and 171 each coordinate (2R)-3-phosphoglycerate. At Lys-191 the chain carries N6-succinyllysine. Tyr-196 bears the Phosphotyrosine mark. Lys-199 bears the N6-acetyllysine mark. Ser-203 is subject to Phosphoserine. Gly-214 contributes to the ADP binding site. Gly-214 lines the CDP pocket. 2 residues coordinate AMP: Ala-215 and Lys-216. Ala-215 provides a ligand contact to ATP. Residue Ala-215 coordinates Mg(2+). Lys-216 carries the N6-(2-hydroxyisobutyryl)lysine modification. Ala-218 and Asp-219 together coordinate Mg(2+). Position 219 (Asp-219) interacts with CDP. Lys-220 lines the AMP pocket. Residue Lys-220 coordinates ATP. Residue Lys-220 is modified to N6-(2-hydroxyisobutyryl)lysine. Gly-238 provides a ligand contact to ADP. Gly-238 is a binding site for CDP. AMP is bound at residue Gly-239. Gly-239 provides a ligand contact to ATP. Residues Lys-267 and Lys-291 each carry the N6-acetyllysine modification. Gly-313 provides a ligand contact to AMP. Residue Gly-313 participates in ATP binding. Residue Lys-323 is modified to N6-(2-hydroxyisobutyryl)lysine. Gly-338, Val-340, and Phe-343 together coordinate CDP. Phe-343 contacts ADP. Glu-344 provides a ligand contact to AMP. Glu-344 contributes to the ATP binding site. Lys-361 carries the N6-acetyllysine modification. Positions 375 and 376 each coordinate ATP. Mg(2+) is bound at residue Asp-375.

The protein belongs to the phosphoglycerate kinase family. Monomer. Interacts with kinase MAPK1/ERK2; the interaction is direct, occurs under hypoxic conditions, and promotes its interaction with PIN1. Interacts with peptidyl-prolyl cis-trans isomerase PIN1; the interaction is direct, occurs under hypoxic conditions, and targets the protein to the mitochondrion by promoting interactions with the TOM complex. Interacts with mitochondrial circRNA mcPGK1 (via its 2nd stem-loop); the interaction is direct and targets the protein to the mitochondrion by promoting interactions with the TOM complex. Interacts with pyruvate dehydrogenase kinase PDK1; the interaction is direct, occurs under hypoxic conditions and leads to PDK1-mediated inhibition of pyruvate dehydrogenase complex activity. It depends on Mg(2+) as a cofactor. Post-translationally, phosphorylated at Ser-203 by MAPK1/ERK2 under hypoxic conditions, which promotes its mitochondrial targeting.

It is found in the cytoplasm. Its subcellular location is the cytosol. It localises to the mitochondrion matrix. It carries out the reaction (2R)-3-phosphoglycerate + ATP = (2R)-3-phospho-glyceroyl phosphate + ADP. The catalysed reaction is L-seryl-[protein] + ATP = O-phospho-L-seryl-[protein] + ADP + H(+). It functions in the pathway carbohydrate degradation; glycolysis; pyruvate from D-glyceraldehyde 3-phosphate: step 2/5. In terms of biological role, catalyzes one of the two ATP producing reactions in the glycolytic pathway via the reversible conversion of 1,3-diphosphoglycerate to 3-phosphoglycerate. Both L- and D- forms of purine and pyrimidine nucleotides can be used as substrates, but the activity is much lower on pyrimidines. In addition to its role as a glycolytic enzyme, it seems that PGK-1 acts as a polymerase alpha cofactor protein (primer recognition protein). Acts as a protein kinase when localized to the mitochondrion where it phosphorylates pyruvate dehydrogenase kinase PDK1 to inhibit pyruvate dehydrogenase complex activity and suppress the formation of acetyl-coenzyme A from pyruvate, and consequently inhibit oxidative phosphorylation and promote glycolysis. May play a role in sperm motility. The polypeptide is Phosphoglycerate kinase 1 (PGK1) (Macaca fascicularis (Crab-eating macaque)).